The following is a 258-amino-acid chain: Large ribosomal subunit protein uL3 (258 aa).

Belongs to the universal ribosomal protein uL3 family. In terms of assembly, part of the 50S ribosomal subunit. Forms a cluster with proteins L14 and L19.

One of the primary rRNA binding proteins, it binds directly near the 3'-end of the 23S rRNA, where it nucleates assembly of the 50S subunit. The chain is Large ribosomal subunit protein uL3 from Spiroplasma kunkelii.